The chain runs to 471 residues: ATP synthase subunit beta (471 aa).

ATP is bound at residue 154-161 (GGAGVGKT).

The protein belongs to the ATPase alpha/beta chains family. As to quaternary structure, F-type ATPases have 2 components, CF(1) - the catalytic core - and CF(0) - the membrane proton channel. CF(1) has five subunits: alpha(3), beta(3), gamma(1), delta(1), epsilon(1). CF(0) has three main subunits: a(1), b(2) and c(9-12). The alpha and beta chains form an alternating ring which encloses part of the gamma chain. CF(1) is attached to CF(0) by a central stalk formed by the gamma and epsilon chains, while a peripheral stalk is formed by the delta and b chains.

The protein localises to the cell membrane. It carries out the reaction ATP + H2O + 4 H(+)(in) = ADP + phosphate + 5 H(+)(out). Functionally, produces ATP from ADP in the presence of a proton gradient across the membrane. The catalytic sites are hosted primarily by the beta subunits. In Mesomycoplasma hyopneumoniae (strain J / ATCC 25934 / NCTC 10110) (Mycoplasma hyopneumoniae), this protein is ATP synthase subunit beta.